The sequence spans 253 residues: Dof zinc finger protein DOF3.4 (253 aa).

Residues 30–84 (LPCPRCDSSNTKFCYYNNYNFSQPRHFCKACRRYWTHGGTLRDVPVGGGTRKSAK) form a Dof-type zinc finger. Zn(2+)-binding residues include cysteine 32, cysteine 35, cysteine 57, and cysteine 60. The interval 73–103 (VPVGGGTRKSAKRSRTCSNSSSSSVSGVVSN) is disordered. Residues 90–103 (SNSSSSSVSGVVSN) are compositionally biased toward low complexity.

Interacts with OBF4 or OBF5. In terms of tissue distribution, constitutively expressed in the whole plant.

The protein localises to the nucleus. Functionally, transcription factor that binds specifically to a 5'-AA[AG]G-3' consensus core sequence. Enhances the DNA binding of OBF transcription factors to OCS elements. The chain is Dof zinc finger protein DOF3.4 (DOF3.4) from Arabidopsis thaliana (Mouse-ear cress).